The sequence spans 464 residues: Interstitial collagenase A (464 aa).

Positions 1–17 (MPSLPLLLLLWAASSYS) are cleaved as a signal peptide. A propeptide spans 18–96 (FPVFHNGDRQ…PRCGVPDVAP (79 aa)) (activation peptide). Positions 87–94 (PRCGVPDV) match the Cysteine switch motif. Cysteine 89 is a binding site for Zn(2+). The segment at 95 to 274 (APYAITHNNP…IQPTGATTPH (180 aa)) is metalloprotease. Ca(2+) is bound at residue aspartate 155. Residues histidine 165 and aspartate 167 each contribute to the Zn(2+) site. Aspartate 172 and glycine 173 together coordinate Ca(2+). Position 180 (histidine 180) interacts with Zn(2+). The Ca(2+) site is built by glycine 187, glycine 189, and aspartate 191. Residue histidine 193 coordinates Zn(2+). 2 residues coordinate Ca(2+): aspartate 195 and glutamate 198. A glycan (N-linked (GlcNAc...) asparagine) is linked at asparagine 202. Residue histidine 215 participates in Zn(2+) binding. Glutamate 216 is an active-site residue. Zn(2+)-binding residues include histidine 219 and histidine 225. 2 Hemopexin repeats span residues 273–322 (PHPC…WPNL) and 323–369 (PVKL…FGFP). Cysteines 276 and 464 form a disulfide. Aspartate 283 is a binding site for Ca(2+). The N-linked (GlcNAc...) asparagine glycan is linked to asparagine 371. Hemopexin repeat units follow at residues 372-420 (VTHI…FPGI) and 421-464 (DDKV…WFNC). Residues aspartate 376 and aspartate 425 each contribute to the Ca(2+) site.

Belongs to the peptidase M10A family. The cofactor is Ca(2+). Zn(2+) is required as a cofactor.

The protein localises to the secreted. Its subcellular location is the extracellular space. The protein resides in the extracellular matrix. The enzyme catalyses Cleavage of the triple helix of collagen at about three-quarters of the length of the molecule from the N-terminus, at 775-Gly-|-Ile-776 in the alpha1(I) chain. Cleaves synthetic substrates and alpha-macroglobulins at bonds where P1' is a hydrophobic residue.. Its activity is regulated as follows. Can be activated without removal of the activation peptide. In terms of biological role, cleaves collagens of types I, II, and III at one site in the helical domain. Also cleaves collagens of types VII and X. Able to degrade synthetic peptides and type I and II fibrillar collagen. The chain is Interstitial collagenase A (Mmp1a) from Mus musculus (Mouse).